The primary structure comprises 229 residues: NAD(P)H-hydrate epimerase (229 aa).

In terms of domain architecture, YjeF N-terminal spans 10 to 217 (AINVDLELFN…ALQRKYELNL (208 aa)). A (6S)-NADPHX-binding site is contributed by 60-64 (NNGGD). K(+)-binding residues include asparagine 61 and aspartate 125. Residues 129–135 (GFSFKPP) and aspartate 158 contribute to the (6S)-NADPHX site. Serine 161 lines the K(+) pocket.

This sequence belongs to the NnrE/AIBP family. The cofactor is K(+).

The enzyme catalyses (6R)-NADHX = (6S)-NADHX. It carries out the reaction (6R)-NADPHX = (6S)-NADPHX. Catalyzes the epimerization of the S- and R-forms of NAD(P)HX, a damaged form of NAD(P)H that is a result of enzymatic or heat-dependent hydration. This is a prerequisite for the S-specific NAD(P)H-hydrate dehydratase to allow the repair of both epimers of NAD(P)HX. This is NAD(P)H-hydrate epimerase from Drosophila virilis (Fruit fly).